Here is a 195-residue protein sequence, read N- to C-terminus: Ras-related protein Rab-31 (195 aa).

7 residues coordinate GTP: Gly16, Gly18, Lys19, Ser20, Ser21, Asp32, and His33. Ser20 provides a ligand contact to Mg(2+). 2 consecutive short sequence motifs (switch) follow at residues 30–42 (HFDH…IGAS) and 63–79 (AGQE…YRGS). A Phosphoserine modification is found at Ser36. GTP-binding residues include Thr38, Gly64, Asn119, Asp122, Ala150, and Lys151. Position 38 (Thr38) interacts with Mg(2+). Residues Cys194 and Cys195 are each lipidated (S-geranylgeranyl cysteine).

This sequence belongs to the small GTPase superfamily. Rab family. In terms of assembly, interacts (in GDP-bound form) with RIN3 and GAPVD1, which function as guanine exchange factors (GEF). Interacts (in GTP-bound form) with EEA1. Interacts with NGFR. Interacts with EGFR. Interacts with OCRL. Interacts (in GTP-bound form) with APPL2; interaction contributes to or enhances recruitment of APPL2 to the phagosomes; interaction enhances Fc-gamma receptor-mediated phagocytosis through PI3K/Akt signaling in macrophages. The cofactor is Mg(2+). Detected in brain astrocytes, spleen and intestine (at protein level).

It localises to the early endosome. It is found in the golgi apparatus. Its subcellular location is the trans-Golgi network. The protein localises to the trans-Golgi network membrane. The protein resides in the cytoplasmic vesicle. It localises to the phagosome. It is found in the phagosome membrane. The enzyme catalyses GTP + H2O = GDP + phosphate + H(+). Regulated by guanine nucleotide exchange factors (GEFs) including RIN3 and GAPVD1 which promote the exchange of bound GDP for free GTP. Regulated by GTPase activating proteins (GAPs) which increase the GTP hydrolysis activity. Inhibited by GDP dissociation inhibitors (GDIs) which prevent Rab-GDP dissociation. Functionally, the small GTPases Rab are key regulators of intracellular membrane trafficking, from the formation of transport vesicles to their fusion with membranes. Rabs cycle between an inactive GDP-bound form and an active GTP-bound form that is able to recruit to membranes different set of downstream effectors directly responsible for vesicle formation, movement, tethering and fusion. Required for the integrity and for normal function of the Golgi apparatus and the trans-Golgi network. Plays a role in insulin-stimulated translocation of GLUT4 to the cell membrane. Plays a role in the maturation of phagosomes that engulf pathogens, such as S.aureus and Mycobacterium. Plays a role in M6PR transport from the trans-Golgi network to endosomes. Plays a role in the internalization of EGFR from the cell membrane into endosomes. The sequence is that of Ras-related protein Rab-31 from Rattus norvegicus (Rat).